The chain runs to 422 residues: Adenylosuccinate synthetase (422 aa).

Residues 11–17 (GDEGKGK) and 39–41 (GHT) each bind GTP. Asp12 acts as the Proton acceptor in catalysis. Positions 12 and 39 each coordinate Mg(2+). IMP-binding positions include 12-15 (DEGK), 37-40 (NAGH), Thr129, Arg143, Asn219, Thr234, and Arg298. His40 acts as the Proton donor in catalysis. 294–300 (VTTGRKR) is a substrate binding site. GTP-binding positions include Arg300, 326 to 328 (KLD), and 411 to 413 (GTG).

It belongs to the adenylosuccinate synthetase family. As to quaternary structure, homodimer. Mg(2+) is required as a cofactor.

The protein localises to the cytoplasm. The catalysed reaction is IMP + L-aspartate + GTP = N(6)-(1,2-dicarboxyethyl)-AMP + GDP + phosphate + 2 H(+). Its pathway is purine metabolism; AMP biosynthesis via de novo pathway; AMP from IMP: step 1/2. Functionally, plays an important role in the de novo pathway and in the salvage pathway of purine nucleotide biosynthesis. Catalyzes the first committed step in the biosynthesis of AMP from IMP. This chain is Adenylosuccinate synthetase, found in Talaromyces stipitatus (strain ATCC 10500 / CBS 375.48 / QM 6759 / NRRL 1006) (Penicillium stipitatum).